Here is a 354-residue protein sequence, read N- to C-terminus: Neuronal growth regulator 1 (354 aa).

The first 37 residues, 1–37, serve as a signal peptide directing secretion; sequence MDMMLLVQGACCSNQWLAAVLLSLCCLLPSCLPAGQS. Ig-like C2-type domains lie at 38-134, 139-221, and 225-313; these read VDFP…VHLT, PKIY…KVVV, and PTIQ…LPLN. A disulfide bridge links Cys-60 with Cys-118. N-linked (GlcNAc...) asparagine glycosylation is found at Asn-73 and Asn-155. Disulfide bonds link Cys-160/Cys-203 and Cys-245/Cys-297. Phosphotyrosine is present on Tyr-187. Residues Asn-275, Asn-286, Asn-294, and Asn-307 are each glycosylated (N-linked (GlcNAc...) asparagine). Gly-324 carries GPI-anchor amidated glycine lipidation. A propeptide spans 325 to 354 (removed in mature form); the sequence is SADVLFSCWYLVLTLSSFTSIFYLKNAILQ.

The protein belongs to the immunoglobulin superfamily. IgLON family.

It localises to the cell membrane. Its function is as follows. May be involved in cell-adhesion. May function as a trans-neural growth-promoting factor in regenerative axon sprouting in the mammalian brain. The sequence is that of Neuronal growth regulator 1 (NEGR1) from Pongo abelii (Sumatran orangutan).